The primary structure comprises 594 residues: MASGGGDDGLRRRGCSCTKDDFLPEESFQSMGNYLKALKETPSRFMDRIMTRSLDSDEINEMKARSGHEMKKTLTWWDLMWFGIGAVIGSGIFVLTGLEARNHSGPAVVLSYVVSGVSAMLSVFCYTEFAVEIPVAGGSFAYLRVELGDFMAFIAAGNIILEYVVGGAAVARSWTSYFATLLNHKPEDFRIIVHKLGEDYSHLDPIAVGVCAIICVLAVVGTKGSSRFNYIASIIHMVVILFVIIAGFTKADVKNYSDFTPYGVRGVFKSAAVLFFAYIGFDAVSTMAEETKNPGRDIPIGLVGSMVVTTVCYCLMAVTLCLMQPYQQIDPDAPFSVAFSAVGWDWAKYIVAFGALKGMTTVLLVGAIGQARYMTHIARAHMMPPWLAQVNAKTGTPINATVVMLAATALIAFFTKLKILADLLSVSTLFIFMFVAVALLVRRYYVTGETSTRDRNKFLVFLGLILASSTATAVYWALEEEGWIGYCITVPIWFLSTVAMKFLVPQARAPKIWGVPLVPWLPSASIAINIFLLGSIDTKSFVRFAIWTGILLIYYVLFGLHATYDTAKATLKEKQALQKAEEGGVVADNSCSAT.

The residue at position 2 (A2) is an N-acetylalanine. The Cytoplasmic segment spans residues 2–78; the sequence is ASGGGDDGLR…EMKKTLTWWD (77 aa). A helical transmembrane segment spans residues 79–99; that stretch reads LMWFGIGAVIGSGIFVLTGLE. The Extracellular portion of the chain corresponds to 100 to 104; it reads ARNHS. N-linked (GlcNAc...) asparagine glycosylation is present at N102. Residues 105–125 traverse the membrane as a helical segment; it reads GPAVVLSYVVSGVSAMLSVFC. At 126-149 the chain is on the cytoplasmic side; the sequence is YTEFAVEIPVAGGSFAYLRVELGD. Residues 150–170 traverse the membrane as a helical segment; sequence FMAFIAAGNIILEYVVGGAAV. The Extracellular segment spans residues 171-201; the sequence is ARSWTSYFATLLNHKPEDFRIIVHKLGEDYS. Residues 202–222 traverse the membrane as a helical segment; that stretch reads HLDPIAVGVCAIICVLAVVGT. Residues 223–227 lie on the Cytoplasmic side of the membrane; sequence KGSSR. A helical transmembrane segment spans residues 228–248; that stretch reads FNYIASIIHMVVILFVIIAGF. Residues 249-266 are Extracellular-facing; it reads TKADVKNYSDFTPYGVRG. Residue N255 is glycosylated (N-linked (GlcNAc...) asparagine). Residues 267 to 287 form a helical membrane-spanning segment; that stretch reads VFKSAAVLFFAYIGFDAVSTM. Residues 288–297 are Cytoplasmic-facing; the sequence is AEETKNPGRD. Residues 298–318 form a helical membrane-spanning segment; sequence IPIGLVGSMVVTTVCYCLMAV. Topologically, residues 319-348 are extracellular; the sequence is TLCLMQPYQQIDPDAPFSVAFSAVGWDWAK. The helical transmembrane segment at 349 to 369 threads the bilayer; that stretch reads YIVAFGALKGMTTVLLVGAIG. At 370 to 393 the chain is on the cytoplasmic side; it reads QARYMTHIARAHMMPPWLAQVNAK. Residues 394–414 form a helical membrane-spanning segment; it reads TGTPINATVVMLAATALIAFF. Topologically, residues 415–418 are extracellular; sequence TKLK. A helical transmembrane segment spans residues 419-439; that stretch reads ILADLLSVSTLFIFMFVAVAL. The Cytoplasmic segment spans residues 440–457; that stretch reads LVRRYYVTGETSTRDRNK. The helical transmembrane segment at 458-478 threads the bilayer; sequence FLVFLGLILASSTATAVYWAL. The Extracellular segment spans residues 479–483; the sequence is EEEGW. The helical transmembrane segment at 484–504 threads the bilayer; it reads IGYCITVPIWFLSTVAMKFLV. Topologically, residues 505–511 are cytoplasmic; it reads PQARAPK. Residues 512–532 traverse the membrane as a helical segment; it reads IWGVPLVPWLPSASIAINIFL. At 533–543 the chain is on the extracellular side; that stretch reads LGSIDTKSFVR. The chain crosses the membrane as a helical span at residues 544–564; that stretch reads FAIWTGILLIYYVLFGLHATY. Over 565 to 594 the chain is Cytoplasmic; it reads DTAKATLKEKQALQKAEEGGVVADNSCSAT.

The protein belongs to the amino acid-polyamine-organocation (APC) superfamily. Cationic amino acid transporter (CAT) (TC 2.A.3.3) family. In terms of tissue distribution, expressed in roots, stems, flowers, petioles, seeds, siliques, and leaves. Mostly present in major veins.

The protein resides in the membrane. With respect to regulation, inhibited by the protonophore 2,4-dinitrophenol. Functionally, high-affinity permease involved in the transport of the cationic amino acids (e.g. arginine, lysine, histidine, citrulline, valine, and glutamate). Transport mostly basic amino acids, and, to a lower extent neutral and acidic amino acids. May function as a proton symporter. The chain is Cationic amino acid transporter 1 (CAT1) from Arabidopsis thaliana (Mouse-ear cress).